The chain runs to 471 residues: Kynurenine 3-monooxygenase (471 aa).

Residues valine 19, 37 to 40 (YESR), and alanine 57 contribute to the FAD site. L-kynurenine-binding residues include arginine 85 and tyrosine 99. Residues arginine 111, leucine 136, threonine 172, aspartate 304, and 317–318 (MN) each bind FAD. L-kynurenine is bound by residues asparagine 363 and tyrosine 398. A run of 2 helical transmembrane segments spans residues 385–404 (CLHT…VTFS) and 425–445 (ALFF…TGPT).

The protein belongs to the aromatic-ring hydroxylase family. KMO subfamily. FAD is required as a cofactor.

It localises to the mitochondrion outer membrane. The catalysed reaction is L-kynurenine + NADPH + O2 + H(+) = 3-hydroxy-L-kynurenine + NADP(+) + H2O. The protein operates within cofactor biosynthesis; NAD(+) biosynthesis; quinolinate from L-kynurenine: step 1/3. Catalyzes the hydroxylation of L-kynurenine (L-Kyn) to form 3-hydroxy-L-kynurenine (L-3OHKyn). Required for synthesis of quinolinic acid, a neurotoxic NMDA receptor antagonist and potential endogenous inhibitor of NMDA receptor signaling in axonal targeting, synaptogenesis and apoptosis during brain development. Quinolinic acid may also affect NMDA receptor signaling in pancreatic beta cells, osteoblasts, myocardial cells, and the gastrointestinal tract. This Sus scrofa (Pig) protein is Kynurenine 3-monooxygenase.